The sequence spans 180 residues: Crossover junction endodeoxyribonuclease RuvC (180 aa).

Active-site residues include Asp-7, Glu-66, and Asp-138. Residues Asp-7, Glu-66, and Asp-138 each contribute to the Mg(2+) site.

The protein belongs to the RuvC family. As to quaternary structure, homodimer which binds Holliday junction (HJ) DNA. The HJ becomes 2-fold symmetrical on binding to RuvC with unstacked arms; it has a different conformation from HJ DNA in complex with RuvA. In the full resolvosome a probable DNA-RuvA(4)-RuvB(12)-RuvC(2) complex forms which resolves the HJ. The cofactor is Mg(2+).

The protein localises to the cytoplasm. It catalyses the reaction Endonucleolytic cleavage at a junction such as a reciprocal single-stranded crossover between two homologous DNA duplexes (Holliday junction).. Its function is as follows. The RuvA-RuvB-RuvC complex processes Holliday junction (HJ) DNA during genetic recombination and DNA repair. Endonuclease that resolves HJ intermediates. Cleaves cruciform DNA by making single-stranded nicks across the HJ at symmetrical positions within the homologous arms, yielding a 5'-phosphate and a 3'-hydroxyl group; requires a central core of homology in the junction. The consensus cleavage sequence is 5'-(A/T)TT(C/G)-3'. Cleavage occurs on the 3'-side of the TT dinucleotide at the point of strand exchange. HJ branch migration catalyzed by RuvA-RuvB allows RuvC to scan DNA until it finds its consensus sequence, where it cleaves and resolves the cruciform DNA. In Paraburkholderia phytofirmans (strain DSM 17436 / LMG 22146 / PsJN) (Burkholderia phytofirmans), this protein is Crossover junction endodeoxyribonuclease RuvC.